The primary structure comprises 194 residues: Cathelicidin-related peptide isoform 3 (194 aa).

The signal sequence occupies residues 1 to 22 (MQGFFWKTWLVLAVCGTPASLA). Residues 23–164 (HRPLSYGEAL…DQPKRVKRFK (142 aa)) constitute a propeptide that is removed on maturation. Disulfide bonds link cysteine 79/cysteine 90 and cysteine 101/cysteine 118. The segment covering 125-145 (EEEEEEEEEEQKAEAENDEEV) has biased composition (acidic residues). The disordered stretch occupies residues 125–156 (EEEEEEEEEEQKAEAENDEEVEKEKGDEEKDQ). The segment covering 146–156 (EKEKGDEEKDQ) has biased composition (basic and acidic residues).

It belongs to the cathelicidin family. As to expression, expressed by the venom gland.

It localises to the secreted. Its subcellular location is the target cell membrane. Functionally, potent antimicrobial peptide against Gram-negative and Gram-positive bacteria. Adopts an amphipathic alpha helical conformation, that may allow to partition into the target membrane. Low hemolytic activities have been observed on mammalian cells. The chain is Cathelicidin-related peptide isoform 3 from Crotalus durissus cascavella (Northeastern Brazilian rattlesnake).